The primary structure comprises 204 residues: Small ribosomal subunit protein uS4 (204 aa).

A disordered region spans residues serine 22–proline 43. The S4 RNA-binding domain occupies threonine 94–leucine 154.

This sequence belongs to the universal ribosomal protein uS4 family. In terms of assembly, part of the 30S ribosomal subunit. Contacts protein S5. The interaction surface between S4 and S5 is involved in control of translational fidelity.

Its function is as follows. One of the primary rRNA binding proteins, it binds directly to 16S rRNA where it nucleates assembly of the body of the 30S subunit. Functionally, with S5 and S12 plays an important role in translational accuracy. This Oenococcus oeni (strain ATCC BAA-331 / PSU-1) protein is Small ribosomal subunit protein uS4.